A 365-amino-acid polypeptide reads, in one-letter code: MLFWIIKITSYFYSSTLFEVMNSVLFRGVGGLFFSLFISIVIGNRIIVWLKYKLRMLQTIRIDGPQSHKLKYGTPTMGGIIILISVVTSVIIWSDLSNIYIWYILFIFVMYGILGLVDDFLKIKRGDNLGLTILNKYLWQSIIAWILIVIMFINRVNYVENQSGLEFLRNIVCKLKIWDMILAYFVIVGTSNSVNLSDGLDGLVIVPVILVVSGLAIVTWVVGNIYITSDLYIEHVDCIKELVVVCASIIGAGLGFLWFNSYPSQIFMGDVGSLSLGGVIGLVSILLHQEYLLLIMGGIFVIESLSVIFQVSYFKIFKKRIFKMAPIHHHFELKGYMEPKIVVRFWIVSSILVLLSIVIFILSKY.

A run of 10 helical transmembrane segments spans residues 29 to 49, 73 to 93, 97 to 117, 133 to 153, 171 to 191, 202 to 222, 242 to 262, 266 to 286, 291 to 311, and 341 to 361; these read VGGL…IIVW, GTPT…VIIW, SNIY…LGLV, ILNK…IMFI, IVCK…VGTS, GLVI…TWVV, LVVV…FNSY, IFMG…VSIL, YLLL…IFQV, and IVVR…VIFI.

It belongs to the glycosyltransferase 4 family. MraY subfamily. Mg(2+) is required as a cofactor.

It localises to the cell inner membrane. The enzyme catalyses UDP-N-acetyl-alpha-D-muramoyl-L-alanyl-gamma-D-glutamyl-meso-2,6-diaminopimeloyl-D-alanyl-D-alanine + di-trans,octa-cis-undecaprenyl phosphate = di-trans,octa-cis-undecaprenyl diphospho-N-acetyl-alpha-D-muramoyl-L-alanyl-D-glutamyl-meso-2,6-diaminopimeloyl-D-alanyl-D-alanine + UMP. The protein operates within cell wall biogenesis; peptidoglycan biosynthesis. Functionally, catalyzes the initial step of the lipid cycle reactions in the biosynthesis of the cell wall peptidoglycan: transfers peptidoglycan precursor phospho-MurNAc-pentapeptide from UDP-MurNAc-pentapeptide onto the lipid carrier undecaprenyl phosphate, yielding undecaprenyl-pyrophosphoryl-MurNAc-pentapeptide, known as lipid I. The protein is Phospho-N-acetylmuramoyl-pentapeptide-transferase of Blochmanniella floridana.